The following is a 338-amino-acid chain: MKRMIALDGAQGEGGGQILRAALSLSMITGQPFTITSIRAGRAKPGLLRQHLTAVKAAAEICRATVEGAELGSQRLVFRPGAVRGGEYRFAIGSAGSCTLVLQTVLPALWFADGPSRVEVSGGTDNPSAPPADFIRRVLEPLLAKIGIHQQTTLLRHGFYPAGGGVVATEVSPVASFNTLQLGERGNIVQMRGEVLLAGVPRHVAEREIATLAGSFSLHEQNIHNLPRDQGPGNTVSLEVESENITERFFVVGEKRVSAEVVAAQLVKEVKRYLASPAAVGEYLADQLVLPMALAGAGEFTVAHPSCHLLTNIAVVERFLPVRFGLIETDGVTRVSIE.

ATP-binding positions include glutamine 103 and tyrosine 283–glutamine 287. Histidine 308 functions as the Tele-AMP-histidine intermediate in the catalytic mechanism.

This sequence belongs to the RNA 3'-terminal cyclase family. Type 1 subfamily.

It localises to the cytoplasm. It carries out the reaction a 3'-end 3'-phospho-ribonucleotide-RNA + ATP = a 3'-end 2',3'-cyclophospho-ribonucleotide-RNA + AMP + diphosphate. Its function is as follows. Catalyzes the conversion of 3'-phosphate to a 2',3'-cyclic phosphodiester at the end of RNA. The mechanism of action of the enzyme occurs in 3 steps: (A) adenylation of the enzyme by ATP; (B) transfer of adenylate to an RNA-N3'P to produce RNA-N3'PP5'A; (C) and attack of the adjacent 2'-hydroxyl on the 3'-phosphorus in the diester linkage to produce the cyclic end product. The biological role of this enzyme is unknown but it is likely to function in some aspects of cellular RNA processing. In Shigella boydii serotype 18 (strain CDC 3083-94 / BS512), this protein is RNA 3'-terminal phosphate cyclase.